A 206-amino-acid polypeptide reads, in one-letter code: uncharacterized protein (206 aa).

The N-terminal stretch at 1–17 (MKGKILFALFLSAGVIA) is a signal peptide. Cys-18 carries the N-palmitoyl cysteine lipid modification. The S-diacylglycerol cysteine moiety is linked to residue Cys-18. The stretch at 21 to 58 (ASQAAKQQEVKVAKAETKTKKKESKAEKFRKALAAQDK) forms a coiled coil. Residues 97 to 201 (GDWRKGESLA…DIVAYLHDPE (105 aa)) form the Cytochrome c domain. Cys-127, Cys-130, and His-131 together coordinate heme c.

It localises to the cell membrane. This is an uncharacterized protein from Aquifex aeolicus (strain VF5).